A 715-amino-acid chain; its full sequence is MGKTKSRGRRAEKKNKKNEPGFNEDVSNLDSDVTITNQEPLSSSISSTSGIPNTFFGLVDNNELDYFKQAESTLNINAFETDEERQGFINSVLDEAQGKELKLVTNQICSKLMERLILFANHNQLKKIFKQFQNHFVSLAFHKYASHVLETLLVRSAALIEKELTQTDEEKLEKAEEEEAEENSLNNDVPMEDLFISMLNEFKPHLTTMIDHSYASHVLRLLILILAGKELPSSVTSNSTLRSKKSKIARKMIEIKDNEDFDRAFQTPQSFKNELREYCQTIIAGLDTKSARELSIHKIGSPVLQLLIQVEGLVDRERSFWHLIFAKDSEGKDSVEESFVEYLLSESVGSHFLESIIKNDGARPKYIERLYKLYMKDRVLKLAKRSTTGVYIIQALLFKLKPVEVEYILDQIIPELAELISIAENQNLDLANKLIDASISRGNYRRDEIINQLFIKFAPNYDIENPSDNTSTEFIENILQLTGSTLGNTRDDWPTAEERKRALFLEKLMEYDYKCVICTWFNFMALPIERFVQMCFHGVFCHVVEKALIVEPEEPKPIQILRKRLLNIFQGQIVGLACNSYGSHIVDSLWNFTVLLPMYKDRIASELLGDSHRVKESTYGRLVWKNWGMELFVRKKYDWKALIKQQEQEYYGETEDSTEKRTKKPIELKMERLAEEKRRQEEMAERAQSGYTKRKLEEATGTASEKKQKLRGRRR.

Positions 1-16 (MGKTKSRGRRAEKKNK) are enriched in basic residues. A disordered region spans residues 1-30 (MGKTKSRGRRAEKKNKKNEPGFNEDVSNLD). Pumilio repeat units follow at residues 95 to 130 (EAQG…KIFK), 131 to 166 (QFQN…ELTQ), 201 to 237 (EFKP…SVTS), 285 to 326 (GLDT…LIFA), 334 to 372 (SVEE…RLYK), 374 to 410 (YMKD…YILD), 525 to 562 (ALPI…QILR), and 567 to 605 (NIFQ…RIAS). The disordered stretch occupies residues 651–715 (YGETEDSTEK…KKQKLRGRRR (65 aa)). Residues 657-685 (STEKRTKKPIELKMERLAEEKRRQEEMAE) show a composition bias toward basic and acidic residues.

It belongs to the NOP9 family.

It is found in the nucleus. It localises to the nucleolus. Functionally, RNA-binding nucleolar protein required for pre-rRNA processing. Involved in production of 18S rRNA and assembly of small ribosomal subunit. The polypeptide is Nucleolar protein 9 (NOP9) (Candida albicans (strain WO-1) (Yeast)).